A 422-amino-acid polypeptide reads, in one-letter code: Mitochondrial distribution and morphology protein 12 (422 aa).

The SMP-LTD domain occupies 1–386; that stretch reads MSFDINWNQL…WPSWICIDMN (386 aa). 2 disordered regions span residues 74 to 134 and 387 to 422; these read GATN…HDLG and DDGD…THEV. Acidic residues-rich tracts occupy residues 109–130 and 387–401; these read FDDD…EYDD and DDGD…EDSN. Basic and acidic residues predominate over residues 405 to 422; it reads GDGKDNDGKHGDGPTHEV.

This sequence belongs to the MDM12 family. Component of the ER-mitochondria encounter structure (ERMES) or MDM complex, composed of MMM1, MDM10, MDM12 and MDM34. An MMM1 homodimer associates with one molecule of MDM12 on each side in a pairwise head-to-tail manner, and the SMP-LTD domains of MMM1 and MDM12 generate a continuous hydrophobic tunnel for phospholipid trafficking.

The protein localises to the mitochondrion outer membrane. Its subcellular location is the endoplasmic reticulum membrane. Its function is as follows. Component of the ERMES/MDM complex, which serves as a molecular tether to connect the endoplasmic reticulum (ER) and mitochondria. Components of this complex are involved in the control of mitochondrial shape and protein biogenesis, and function in nonvesicular lipid trafficking between the ER and mitochondria. MDM12 is required for the interaction of the ER-resident membrane protein MMM1 and the outer mitochondrial membrane-resident beta-barrel protein MDM10. The MDM12-MMM1 subcomplex functions in the major beta-barrel assembly pathway that is responsible for biogenesis of all mitochondrial outer membrane beta-barrel proteins, and acts in a late step after the SAM complex. The MDM10-MDM12-MMM1 subcomplex further acts in the TOM40-specific pathway after the action of the MDM12-MMM1 complex. Essential for establishing and maintaining the structure of mitochondria and maintenance of mtDNA nucleoids. This chain is Mitochondrial distribution and morphology protein 12, found in Candida dubliniensis (strain CD36 / ATCC MYA-646 / CBS 7987 / NCPF 3949 / NRRL Y-17841) (Yeast).